The sequence spans 291 residues: N-acetylmannosamine kinase (291 aa).

ATP contacts are provided by residues 5–12 and 132–139; these read AIDIGGTK and GVGGGVVS. His-156, Cys-166, Cys-168, and Cys-173 together coordinate Zn(2+).

Belongs to the ROK (NagC/XylR) family. NanK subfamily. Homodimer.

The enzyme catalyses an N-acyl-D-mannosamine + ATP = an N-acyl-D-mannosamine 6-phosphate + ADP + H(+). It participates in amino-sugar metabolism; N-acetylneuraminate degradation; D-fructose 6-phosphate from N-acetylneuraminate: step 2/5. Functionally, catalyzes the phosphorylation of N-acetylmannosamine (ManNAc) to ManNAc-6-P. The protein is N-acetylmannosamine kinase of Escherichia coli O1:K1 / APEC.